Here is a 1342-residue protein sequence, read N- to C-terminus: DNA-directed RNA polymerase subunit beta (1342 aa).

Lysine 1022 and lysine 1200 each carry N6-acetyllysine.

The protein belongs to the RNA polymerase beta chain family. As to quaternary structure, the RNAP catalytic core consists of 2 alpha, 1 beta, 1 beta' and 1 omega subunit. When a sigma factor is associated with the core the holoenzyme is formed, which can initiate transcription.

It catalyses the reaction RNA(n) + a ribonucleoside 5'-triphosphate = RNA(n+1) + diphosphate. In terms of biological role, DNA-dependent RNA polymerase catalyzes the transcription of DNA into RNA using the four ribonucleoside triphosphates as substrates. The protein is DNA-directed RNA polymerase subunit beta of Shigella dysenteriae serotype 1 (strain Sd197).